The following is a 464-amino-acid chain: Siroheme synthase (464 aa).

The tract at residues 1 to 203 (MEYLPLFHNL…GQGAEAERLL (203 aa)) is precorrin-2 dehydrogenase /sirohydrochlorin ferrochelatase. Residues 22 to 23 (EI) and 43 to 44 (PE) each bind NAD(+). At Ser128 the chain carries Phosphoserine. The segment at 216–464 (GEVYLVGAGP…AWFEGAQSEV (249 aa)) is uroporphyrinogen-III C-methyltransferase. Pro225 contacts S-adenosyl-L-methionine. Asp248 serves as the catalytic Proton acceptor. Catalysis depends on Lys270, which acts as the Proton donor. Residues 301 to 303 (GGD), Ile306, 331 to 332 (TA), Met383, and Gly412 each bind S-adenosyl-L-methionine.

This sequence in the N-terminal section; belongs to the precorrin-2 dehydrogenase / sirohydrochlorin ferrochelatase family. In the C-terminal section; belongs to the precorrin methyltransferase family.

It catalyses the reaction uroporphyrinogen III + 2 S-adenosyl-L-methionine = precorrin-2 + 2 S-adenosyl-L-homocysteine + H(+). The enzyme catalyses precorrin-2 + NAD(+) = sirohydrochlorin + NADH + 2 H(+). The catalysed reaction is siroheme + 2 H(+) = sirohydrochlorin + Fe(2+). The protein operates within cofactor biosynthesis; adenosylcobalamin biosynthesis; precorrin-2 from uroporphyrinogen III: step 1/1. Its pathway is cofactor biosynthesis; adenosylcobalamin biosynthesis; sirohydrochlorin from precorrin-2: step 1/1. It functions in the pathway porphyrin-containing compound metabolism; siroheme biosynthesis; precorrin-2 from uroporphyrinogen III: step 1/1. It participates in porphyrin-containing compound metabolism; siroheme biosynthesis; siroheme from sirohydrochlorin: step 1/1. The protein operates within porphyrin-containing compound metabolism; siroheme biosynthesis; sirohydrochlorin from precorrin-2: step 1/1. Multifunctional enzyme that catalyzes the SAM-dependent methylations of uroporphyrinogen III at position C-2 and C-7 to form precorrin-2 via precorrin-1. Then it catalyzes the NAD-dependent ring dehydrogenation of precorrin-2 to yield sirohydrochlorin. Finally, it catalyzes the ferrochelation of sirohydrochlorin to yield siroheme. The polypeptide is Siroheme synthase (Pseudomonas fluorescens (strain ATCC BAA-477 / NRRL B-23932 / Pf-5)).